The following is a 2287-amino-acid chain: Protein Ycf2 (2287 aa).

Residue 1632–1639 participates in ATP binding; that stretch reads GSIGTGRS.

This sequence belongs to the Ycf2 family.

Its subcellular location is the plastid. It localises to the chloroplast stroma. Functionally, probable ATPase of unknown function. Its presence in a non-photosynthetic plant (Epifagus virginiana) and experiments in tobacco indicate that it has an essential function which is probably not related to photosynthesis. The polypeptide is Protein Ycf2 (Calycanthus floridus var. glaucus (Eastern sweetshrub)).